Reading from the N-terminus, the 277-residue chain is Transmembrane protein 53 (277 aa).

The helical transmembrane segment at 171 to 191 threads the bilayer; that stretch reads LLLLVAFALVVVLFHVLLAPI.

The protein belongs to the TMEM53 family. Widely expressed.

Its subcellular location is the nucleus outer membrane. Its function is as follows. Ensures normal bone formation, through the negative regulation of bone morphogenetic protein (BMP) signaling in osteoblast lineage cells by blocking cytoplasm-nucleus translocation of phosphorylated SMAD1/5/9 proteins. In Homo sapiens (Human), this protein is Transmembrane protein 53 (TMEM53).